Here is a 648-residue protein sequence, read N- to C-terminus: tRNA 5-methylaminomethyl-2-thiouridine biosynthesis bifunctional protein MnmC (648 aa).

The segment at 1 to 228 (MTDRLVPASL…VDDLLVGEYA (228 aa)) is tRNA (mnm(5)s(2)U34)-methyltransferase. Positions 252–648 (IGAGLAGCAV…LRARRVGRAG (397 aa)) are FAD-dependent cmnm(5)s(2)U34 oxidoreductase.

This sequence in the N-terminal section; belongs to the methyltransferase superfamily. tRNA (mnm(5)s(2)U34)-methyltransferase family. The protein in the C-terminal section; belongs to the DAO family. It depends on FAD as a cofactor.

It localises to the cytoplasm. It carries out the reaction 5-aminomethyl-2-thiouridine(34) in tRNA + S-adenosyl-L-methionine = 5-methylaminomethyl-2-thiouridine(34) in tRNA + S-adenosyl-L-homocysteine + H(+). Catalyzes the last two steps in the biosynthesis of 5-methylaminomethyl-2-thiouridine (mnm(5)s(2)U) at the wobble position (U34) in tRNA. Catalyzes the FAD-dependent demodification of cmnm(5)s(2)U34 to nm(5)s(2)U34, followed by the transfer of a methyl group from S-adenosyl-L-methionine to nm(5)s(2)U34, to form mnm(5)s(2)U34. The chain is tRNA 5-methylaminomethyl-2-thiouridine biosynthesis bifunctional protein MnmC from Burkholderia lata (strain ATCC 17760 / DSM 23089 / LMG 22485 / NCIMB 9086 / R18194 / 383).